The sequence spans 839 residues: V-type proton ATPase 116 kDa subunit a 1 (839 aa).

Over 1–395 (MGELFRSEEM…DAYGIGTYRE (395 aa)) the chain is Cytoplasmic. A phosphothreonine mark is found at Thr-257 and Thr-367. Tyr-371 carries the phosphotyrosine modification. A helical membrane pass occupies residues 396–414 (INPAPYTVITFPFLFAVMF). Residues 415-416 (GD) are Vacuolar-facing. Residues 417–433 (FGHGILMTLFAVWMVLR) traverse the membrane as a helical segment. At 434–448 (ESRILSQKHENEMFS) the chain is on the cytoplasmic side. Residues 449-478 (MVFSGRYIILLMGLFSIYTGLIYNDCFSKS) traverse the membrane as a helical segment. Over 479–542 (LNIFGSSWSV…ATNKLTFLNS (64 aa)) the chain is Vacuolar. The chain crosses the membrane as a helical span at residues 543 to 562 (FKMKMSVILGIIHMLFGVSL). Residues 563-580 (SLFNHIYFKKPLNIYFGF) are Cytoplasmic-facing. Residues 581–601 (IPEIIFMSSLFGYLVILIFYK) traverse the membrane as a helical segment. Residues 602–646 (WTAYDAHSSRNAPSLLIHFINMFLFSYPESGNAMLYSGQKGIQCF) are Vacuolar-facing. The helical transmembrane segment at 647–666 (LIVVAMLCVPWMLLFKPLIL) threads the bilayer. The Cytoplasmic portion of the chain corresponds to 667 to 726 (RHQYLRKKHLGTLNFGGIRVGNGPTEEDAEIIQHDQLSTHSEDAEEFDFGDTMVHQAIHT). A helical transmembrane segment spans residues 727 to 751 (IEYCLGCISNTASYLRLWALSLAHA). At 752 to 772 (QLSEVLWTMVIHIGLHVRSLA) the chain is on the vacuolar side. A helical membrane pass occupies residues 773-811 (GGLGLFFIFAAFATLTVAILLIMEGLSAFLHALRLHWVE). Residues 812 to 839 (FQNKFYTGTGFKFLPFSFEHIREGKFDE) lie on the Cytoplasmic side of the membrane.

It belongs to the V-ATPase 116 kDa subunit family. V-ATPase is a heteromultimeric enzyme made up of two complexes: the ATP-hydrolytic V1 complex and the proton translocation V0 complex. The V1 complex consists of three catalytic AB heterodimers that form a heterohexamer, three peripheral stalks each consisting of EG heterodimers, one central rotor including subunits D and F, and the regulatory subunits C and H. The proton translocation complex V0 consists of the proton transport subunit a, a ring of proteolipid subunits c9c'', rotary subunit d, subunits e and f, and the accessory subunits ATP6AP1/Ac45 and ATP6AP2/PRR. Interacts with SPAAR. Predominantly expressed in neurons in the cortex and in the dentate gyrus, CA1 and CA3 regions of the hippocampus (at protein level). Expressed at lower levels in astrocytes, oligodendrocytes and microglia (at protein level). In the cerebellum, present in Purkinje and granule cells (at protein level).

It is found in the cytoplasmic vesicle. The protein resides in the clathrin-coated vesicle membrane. It localises to the secretory vesicle. Its subcellular location is the synaptic vesicle membrane. The protein localises to the melanosome. In terms of biological role, subunit of the V0 complex of vacuolar(H+)-ATPase (V-ATPase), a multisubunit enzyme composed of a peripheral complex (V1) that hydrolyzes ATP and a membrane integral complex (V0) that translocates protons. V-ATPase is responsible for the acidification of various organelles, such as lysosomes, endosomes, the trans-Golgi network, and secretory granules, including synaptic vesicles. In certain cell types, can be exported to the plasma membrane, where it is involved in the acidification of the extracellular environment. Required for assembly and activity of the vacuolar ATPase. Through its action on compartment acidification, plays an essential role in neuronal development in terms of integrity and connectivity of neurons. In Mus musculus (Mouse), this protein is V-type proton ATPase 116 kDa subunit a 1 (Atp6v0a1).